Reading from the N-terminus, the 141-residue chain is Large ribosomal subunit protein uL11 (141 aa).

The protein belongs to the universal ribosomal protein uL11 family. In terms of assembly, part of the ribosomal stalk of the 50S ribosomal subunit. Interacts with L10 and the large rRNA to form the base of the stalk. L10 forms an elongated spine to which L12 dimers bind in a sequential fashion forming a multimeric L10(L12)X complex. In terms of processing, one or more lysine residues are methylated.

Forms part of the ribosomal stalk which helps the ribosome interact with GTP-bound translation factors. The sequence is that of Large ribosomal subunit protein uL11 from Fusobacterium nucleatum subsp. nucleatum (strain ATCC 25586 / DSM 15643 / BCRC 10681 / CIP 101130 / JCM 8532 / KCTC 2640 / LMG 13131 / VPI 4355).